Consider the following 458-residue polypeptide: Chromosomal replication initiator protein DnaA (458 aa).

A domain I, interacts with DnaA modulators region spans residues 1–84 (MENIWLEAQT…FHVAEEKPEA (84 aa)). Residues 80 to 119 (EKPEAAHEAKPEKEAKPAREKERDKDKEKEKDREKEKKEL) show a composition bias toward basic and acidic residues. Residues 80 to 120 (EKPEAAHEAKPEKEAKPAREKERDKDKEKEKDREKEKKELV) form a disordered region. Residues 84–121 (AAHEAKPEKEAKPAREKERDKDKEKEKDREKEKKELVP) form a domain II region. The domain III, AAA+ region stretch occupies residues 122 to 338 (NLNPKYTFES…GMLIRLEAFA (217 aa)). ATP contacts are provided by G166, G168, K169, and T170. The interval 339–458 (SLTGQEITLS…VEDIRKKLFT (120 aa)) is domain IV, binds dsDNA.

It belongs to the DnaA family. Oligomerizes as a right-handed, spiral filament on DNA at oriC.

The protein resides in the cytoplasm. Its function is as follows. Plays an essential role in the initiation and regulation of chromosomal replication. ATP-DnaA binds to the origin of replication (oriC) to initiate formation of the DNA replication initiation complex once per cell cycle. Binds the DnaA box (a 9 base pair repeat at the origin) and separates the double-stranded (ds)DNA. Forms a right-handed helical filament on oriC DNA; dsDNA binds to the exterior of the filament while single-stranded (ss)DNA is stabiized in the filament's interior. The ATP-DnaA-oriC complex binds and stabilizes one strand of the AT-rich DNA unwinding element (DUE), permitting loading of DNA polymerase. After initiation quickly degrades to an ADP-DnaA complex that is not apt for DNA replication. Binds acidic phospholipids. The protein is Chromosomal replication initiator protein DnaA of Citrifermentans bemidjiense (strain ATCC BAA-1014 / DSM 16622 / JCM 12645 / Bem) (Geobacter bemidjiensis).